We begin with the raw amino-acid sequence, 261 residues long: CD40 ligand (261 aa).

Topologically, residues 1 to 22 (MVETYHQPAPRSAATGLPVSMK) are cytoplasmic. A helical; Signal-anchor for type II membrane protein membrane pass occupies residues 23 to 43 (IFMYLLTVFLITQMIGSALFA). Residues 44 to 261 (VYLHRRLDKI…GFTSFGLLKL (218 aa)) are Extracellular-facing. The THD domain maps to 122-261 (IAAHVISEAS…GFTSFGLLKL (140 aa)). Cysteines 178 and 218 form a disulfide. An N-linked (GlcNAc...) asparagine glycan is attached at asparagine 240.

The protein belongs to the tumor necrosis factor family. In terms of assembly, homotrimer. Interacts with CD28. CD40 ligand, soluble form: Exists as either a monomer or a homotrimer. Forms a ternary complex between CD40 and integrins for CD40-CD40LG signaling. The soluble form derives from the membrane form by proteolytic processing.

The protein localises to the cell membrane. It localises to the cell surface. It is found in the secreted. Functionally, cytokine that acts as a ligand to CD40/TNFRSF5. Costimulates T-cell proliferation and cytokine production. Its cross-linking on T-cells generates a costimulatory signal which enhances the production of IL4 and IL10 in conjunction with the TCR/CD3 ligation and CD28 costimulation. Induces the activation of NF-kappa-B. Induces the activation of kinases MAPK8 and PAK2 in T-cells. Mediates B-cell proliferation in the absence of co-stimulus as well as IgE production in the presence of IL4. Involved in immunoglobulin class switching. Acts as a ligand for integrins, specifically ITGA5:ITGB1 and ITGAV:ITGB3; both integrins and the CD40 receptor are required for activation of CD40-CD40LG signaling, which have cell-type dependent effects, such as B-cell activation, NF-kappa-B signaling and anti-apoptotic signaling. The polypeptide is CD40 ligand (CD40LG) (Aotus trivirgatus (Three-striped night monkey)).